Reading from the N-terminus, the 690-residue chain is Glycine--tRNA ligase beta subunit (690 aa).

It belongs to the class-II aminoacyl-tRNA synthetase family. Tetramer of two alpha and two beta subunits.

It localises to the cytoplasm. The enzyme catalyses tRNA(Gly) + glycine + ATP = glycyl-tRNA(Gly) + AMP + diphosphate. The polypeptide is Glycine--tRNA ligase beta subunit (Lactobacillus gasseri (strain ATCC 33323 / DSM 20243 / BCRC 14619 / CIP 102991 / JCM 1131 / KCTC 3163 / NCIMB 11718 / NCTC 13722 / AM63)).